The chain runs to 114 residues: Holo-[acyl-carrier-protein] synthase (114 aa).

Mg(2+)-binding residues include D5 and E50.

This sequence belongs to the P-Pant transferase superfamily. AcpS family. The cofactor is Mg(2+).

The protein resides in the cytoplasm. It catalyses the reaction apo-[ACP] + CoA = holo-[ACP] + adenosine 3',5'-bisphosphate + H(+). Its function is as follows. Transfers the 4'-phosphopantetheine moiety from coenzyme A to a Ser of acyl-carrier-protein. In Campylobacter curvus (strain 525.92), this protein is Holo-[acyl-carrier-protein] synthase.